Here is a 261-residue protein sequence, read N- to C-terminus: Putative hydro-lyase SSP0308 (261 aa).

Belongs to the D-glutamate cyclase family.

The protein is Putative hydro-lyase SSP0308 of Staphylococcus saprophyticus subsp. saprophyticus (strain ATCC 15305 / DSM 20229 / NCIMB 8711 / NCTC 7292 / S-41).